The primary structure comprises 124 residues: Testis-expressed protein 54 (124 aa).

Residues 1–10 show a composition bias toward basic and acidic residues; sequence MGCCQDKDFE. Disordered stretches follow at residues 1–77 and 90–124; these read MGCC…SNES and FGRR…PEKG. A compositionally biased stretch (acidic residues) spans 11–30; that stretch reads MSDEQSKEEESEDGREDETT. Basic and acidic residues-rich tracts occupy residues 34–50 and 101–124; these read RGPR…RGEL and RQPD…PEKG.

As to expression, expressed in Testis.

This chain is Testis-expressed protein 54, found in Homo sapiens (Human).